The following is a 224-amino-acid chain: F420-dependent NADP reductase (224 aa).

NADP(+) is bound by residues 9 to 12, 31 to 32, Lys-36, Val-74, Val-100, and Ala-145; these read TGDQ and SR.

Belongs to the F420-dependent NADP reductase family. Homotetramer.

The enzyme catalyses reduced coenzyme F420-(gamma-L-Glu)(n) + NADP(+) = oxidized coenzyme F420-(gamma-L-Glu)(n) + NADPH + 2 H(+). Functionally, catalyzes the reduction of NADP(+) with F420H(2) via hydride transfer, and the reverse reaction, i.e. the reduction of F420 with NADPH. Probably functions in the regeneration of NADPH required in biosynthetic reactions. In Methanothermobacter marburgensis (strain ATCC BAA-927 / DSM 2133 / JCM 14651 / NBRC 100331 / OCM 82 / Marburg) (Methanobacterium thermoautotrophicum), this protein is F420-dependent NADP reductase.